Here is a 229-residue protein sequence, read N- to C-terminus: Sugar fermentation stimulation protein homolog (229 aa).

This sequence belongs to the SfsA family.

The protein is Sugar fermentation stimulation protein homolog of Clostridium novyi (strain NT).